The primary structure comprises 262 residues: 2-aminoethylphosphonate dioxygenase (262 aa).

Lys108 lines the 2-oxoglutarate pocket. 3 residues coordinate Fe cation: His118, Asp120, and His198.

The protein belongs to the PhyH family. Fe(2+) is required as a cofactor.

The enzyme catalyses (2-aminoethyl)phosphonate + 2-oxoglutarate + O2 = (1R)-(2-amino-1-hydroxyethyl)phosphonate + succinate + CO2. With respect to regulation, activity is enhanced by ascorbate. Involved in the degradation of the organophosphonate 2-aminoethylphosphonic acid (2-AEP). Catalyzes the hydroxylation of 2-aminoethylphosphonic acid to yield (2-amino-1-hydroxyethyl)phosphonic acid. This is 2-aminoethylphosphonate dioxygenase from Uncultured bacterium HF130_AEPn_1.